The following is a 571-amino-acid chain: Germacrene B synthase TPS16CC (571 aa).

(2E,6E)-farnesyl diphosphate is bound by residues Arg287, Asp324, Asp328, Arg465, and Asp468. 2 residues coordinate Mg(2+): Asp324 and Asp328. A DDXXD motif motif is present at residues 324-328; that stretch reads DDIYD. Residues Asp468, Ser472, and Glu476 each contribute to the Mg(2+) site.

This sequence belongs to the terpene synthase family. Tpsb subfamily. Mg(2+) is required as a cofactor. Mn(2+) serves as cofactor. As to expression, highly expressed in glandular trichomes.

The catalysed reaction is (2E,6E)-farnesyl diphosphate = (1E,4E)-germacrene B + diphosphate. It participates in secondary metabolite biosynthesis; terpenoid biosynthesis. Involved in sesquiterpene olefins biosynthesis, constituants of cannabinoids and terpenoids-rich resins. Catalyzes mainly the conversion of (2E)-farnesyl diphosphate to germacrene B, which is spontaneously converted to gamma-elemene as a thermal degradation product. The protein is Germacrene B synthase TPS16CC of Cannabis sativa (Hemp).